The primary structure comprises 359 residues: MMKENINDFLNTILKGDCIEKLKTIPNESIDLIFADPPYFMQTEGKLLRTNGDEFSGVDDEWDKFNDFVEYDSFCELWLKECKRILKSTGSIWVIGSFQNIYRIGYIMQNLDFWILNDVIWNKTNPVPNFGGTRFCNAHETMLWCSKCKKNKFTFNYKTMKHLNQEKQERSVWSLSLCTGKERIKDEEGKKAHSTQKPESLLYKVILSSSKPNDVVLDPFFGTGTTGAVAKALGRNYIGIEREQKYIDVAEKRLREIKPNPNDIELLSLEIKPPKVPMKTLIEADFLRVGQTLFDKNENAICIVTQDGNVKDNEETLSIHKMSAKYLNKTNNNGWDYFYLFRNNNFITLDSLRYEYTNQ.

Residues 275-358 (KVPMKTLIEA…LDSLRYEYTN (84 aa)) enclose the RAMA domain.

Belongs to the N(4)/N(6)-methyltransferase family.

The enzyme catalyses a 2'-deoxyadenosine in DNA + S-adenosyl-L-methionine = an N(6)-methyl-2'-deoxyadenosine in DNA + S-adenosyl-L-homocysteine + H(+). In terms of biological role, a beta subtype methylase that recognizes the double-stranded sequence 5'-GANTC-3', methylates A-2 on both strands, and protects the DNA from cleavage by the HinfI endonuclease. This chain is Type II methyltransferase M.HinfI (hinfIM), found in Haemophilus influenzae.